The primary structure comprises 326 residues: MKNIAIIGASGYTGAQITSLIHADAGLSVQGLYVSENSLDKGRELSELYPLYSHLPYVLNPLSDDVKAKIVAESDAVVLATEHSVSLELAAWFYQQGLAVFDLSGAYRFADVAQYPKWYGFEHTHPDVLAEAVYGLAEWNAAEIAKTRMIAVPGCYPTASLTALKPLKSLLTSAYPVINAVSGVTGAGRKAHLHTSFCEVSLTPYGVLGHRHQPEIATQLGQEVIFTPHLGNFKRGILATITVQLQPGTTEEQVKQAYEVYDNSPLVTVKHNAFPKVDDVVHTPNCHLGWKYDANSGYLVVASAIDNLMKGAASQGLQCIKIHFNL.

The active site involves Cys-155.

It belongs to the NAGSA dehydrogenase family. Type 1 subfamily.

It is found in the cytoplasm. It carries out the reaction N-acetyl-L-glutamate 5-semialdehyde + phosphate + NADP(+) = N-acetyl-L-glutamyl 5-phosphate + NADPH + H(+). The protein operates within amino-acid biosynthesis; L-arginine biosynthesis; N(2)-acetyl-L-ornithine from L-glutamate: step 3/4. Catalyzes the NADPH-dependent reduction of N-acetyl-5-glutamyl phosphate to yield N-acetyl-L-glutamate 5-semialdehyde. The chain is N-acetyl-gamma-glutamyl-phosphate reductase from Shewanella denitrificans (strain OS217 / ATCC BAA-1090 / DSM 15013).